Here is a 222-residue protein sequence, read N- to C-terminus: UPF0758 protein Cpar_0627 (222 aa).

The region spanning 100–222 (KIQGAQDVFE…WFSFRDHSLL (123 aa)) is the MPN domain. 3 residues coordinate Zn(2+): histidine 171, histidine 173, and aspartate 184. The JAMM motif signature appears at 171 to 184 (HNHPSGDVQPSNAD).

This sequence belongs to the UPF0758 family.

The polypeptide is UPF0758 protein Cpar_0627 (Chlorobaculum parvum (strain DSM 263 / NCIMB 8327) (Chlorobium vibrioforme subsp. thiosulfatophilum)).